The sequence spans 492 residues: MPQVTKTNNENEFRLTRSKVQHQESISTIKNTTISNSQHKQQTQQQISSPPQVSVTSSEGVSHVNTRQYLGDVSNQYITNAKPTNKRKPLGGDNAPLQKQQHRPSRPIPIASDNNNNGSTSSSSNSSNNNNNDANRLASLAVPSRLPQKRQATESSTNLVEKLRVPQPEVGERSQSYHKKSRLIDYEWQDLDEEDNDDQLMVSEYVNEIFSYYYELETRMLPDPQYLFKQTLLKPRMRSILVDWLVEMHLKFKLLPESLFLAVNVMDRFMSVEVVQIDKLQLLATAALFTAAKNEEVFSPSVKNYAYFTDGSYTPEEVVQAEKYMLTILNFDLNYPNPMNFLRRISKADDYDVQSRTLGKYLLEITIVDYKFIGMRPSLCCASAMYLARLILGKLPVWNGNLIHYSGGYRISDMRECIELMFQYLIAPIEHDEFFKKYAMRKFMRASTLCRNWAKKFQASGRDLFDERLSTHRLTLEDDDEEEEIVVAEAEE.

A disordered region spans residues 1-176; sequence MPQVTKTNNE…QPEVGERSQS (176 aa). Over residues 23-33 the composition is skewed to polar residues; it reads QESISTIKNTT. The segment covering 34-58 has biased composition (low complexity); the sequence is ISNSQHKQQTQQQISSPPQVSVTSS. The segment covering 59-83 has biased composition (polar residues); sequence EGVSHVNTRQYLGDVSNQYITNAKP. Residues 111 to 135 are compositionally biased toward low complexity; sequence ASDNNNNGSTSSSSNSSNNNNNDAN.

It belongs to the cyclin family. Cyclin AB subfamily.

Essential for the control of the cell cycle at the G2/M (mitosis) transition. Interacts with the CDC2 protein kinase to form MPF. G2/M cyclins accumulate steadily during G2 and are abruptly destroyed at mitosis. The protein is G2/mitotic-specific cyclin CYB1 (CYB1) of Candida albicans (Yeast).